A 400-amino-acid polypeptide reads, in one-letter code: tRNA(Ile)-lysidine synthase (400 aa).

ATP is bound at residue 20–25 (SGGLDS).

It belongs to the tRNA(Ile)-lysidine synthase family.

Its subcellular location is the cytoplasm. It carries out the reaction cytidine(34) in tRNA(Ile2) + L-lysine + ATP = lysidine(34) in tRNA(Ile2) + AMP + diphosphate + H(+). Functionally, ligates lysine onto the cytidine present at position 34 of the AUA codon-specific tRNA(Ile) that contains the anticodon CAU, in an ATP-dependent manner. Cytidine is converted to lysidine, thus changing the amino acid specificity of the tRNA from methionine to isoleucine. This is tRNA(Ile)-lysidine synthase from Wigglesworthia glossinidia brevipalpis.